The chain runs to 134 residues: ATP synthase epsilon chain (134 aa).

This sequence belongs to the ATPase epsilon chain family. As to quaternary structure, F-type ATPases have 2 components, CF(1) - the catalytic core - and CF(0) - the membrane proton channel. CF(1) has five subunits: alpha(3), beta(3), gamma(1), delta(1), epsilon(1). CF(0) has three main subunits: a, b and c.

It is found in the cell inner membrane. Functionally, produces ATP from ADP in the presence of a proton gradient across the membrane. This chain is ATP synthase epsilon chain, found in Sinorhizobium medicae (strain WSM419) (Ensifer medicae).